A 197-amino-acid polypeptide reads, in one-letter code: ATP-dependent Clp protease proteolytic subunit (197 aa).

Serine 102 serves as the catalytic Nucleophile. The active site involves histidine 127.

The protein belongs to the peptidase S14 family. In terms of assembly, fourteen ClpP subunits assemble into 2 heptameric rings which stack back to back to give a disk-like structure with a central cavity, resembling the structure of eukaryotic proteasomes.

The protein localises to the cytoplasm. The enzyme catalyses Hydrolysis of proteins to small peptides in the presence of ATP and magnesium. alpha-casein is the usual test substrate. In the absence of ATP, only oligopeptides shorter than five residues are hydrolyzed (such as succinyl-Leu-Tyr-|-NHMec, and Leu-Tyr-Leu-|-Tyr-Trp, in which cleavage of the -Tyr-|-Leu- and -Tyr-|-Trp bonds also occurs).. Cleaves peptides in various proteins in a process that requires ATP hydrolysis. Has a chymotrypsin-like activity. Plays a major role in the degradation of misfolded proteins. This chain is ATP-dependent Clp protease proteolytic subunit, found in Borreliella afzelii (strain PKo) (Borrelia afzelii).